The following is a 359-amino-acid chain: Leafy/floricaula homolog FL1 (359 aa).

A disordered region spans residues 113–170 (SEEQVVQHSEKDQLGRAGSGDTAGTSWGAQQQRKKHRHRHHITAMKGAATEEDEEDEE). Residues 144-155 (QRKKHRHRHHIT) show a composition bias toward basic residues. 3 DNA-binding regions span residues 179–183 (REHPF), 248–255 (NKPKMRHY), and 320–323 (YVPT). Residues 340–352 (ASSASTSTSAPTA) show a composition bias toward low complexity. The tract at residues 340-359 (ASSASTSTSAPTAHHLELPY) is disordered.

This sequence belongs to the FLO/LFY family. As to expression, expressed strongly in the early floral primordium and then successively in the primordia of sepals, petals, stamens and carpels. Also in the leaf primordia and young leaves.

Its subcellular location is the nucleus. In terms of biological role, probable transcription factor. The sequence is that of Leafy/floricaula homolog FL1 (LF1) from Eucalyptus globulus (Tasmanian blue gum).